The chain runs to 186 residues: ATP synthase subunit b (186 aa).

Residues 28–48 traverse the membrane as a helical segment; it reads IVWSIIPFAVILFVFWKFVLP.

It belongs to the ATPase B chain family. F-type ATPases have 2 components, F(1) - the catalytic core - and F(0) - the membrane proton channel. F(1) has five subunits: alpha(3), beta(3), gamma(1), delta(1), epsilon(1). F(0) has three main subunits: a(1), b(2) and c(10-14). The alpha and beta chains form an alternating ring which encloses part of the gamma chain. F(1) is attached to F(0) by a central stalk formed by the gamma and epsilon chains, while a peripheral stalk is formed by the delta and b chains.

The protein resides in the cell membrane. F(1)F(0) ATP synthase produces ATP from ADP in the presence of a proton or sodium gradient. F-type ATPases consist of two structural domains, F(1) containing the extramembraneous catalytic core and F(0) containing the membrane proton channel, linked together by a central stalk and a peripheral stalk. During catalysis, ATP synthesis in the catalytic domain of F(1) is coupled via a rotary mechanism of the central stalk subunits to proton translocation. Its function is as follows. Component of the F(0) channel, it forms part of the peripheral stalk, linking F(1) to F(0). The chain is ATP synthase subunit b from Corynebacterium jeikeium (strain K411).